Consider the following 144-residue polypeptide: Large ribosomal subunit protein uL15 (144 aa).

The segment at methionine 1–tyrosine 45 is disordered. The span at arginine 21 to cysteine 31 shows a compositional bias: gly residues.

The protein belongs to the universal ribosomal protein uL15 family. Part of the 50S ribosomal subunit.

Its function is as follows. Binds to the 23S rRNA. This Legionella pneumophila (strain Paris) protein is Large ribosomal subunit protein uL15.